The primary structure comprises 1001 residues: Translation initiation factor IF-2 (1001 aa).

Residues 34–404 are disordered; the sequence is KSHSSTISES…SRGDRRDRKE (371 aa). Residues 67-80 are compositionally biased toward basic and acidic residues; sequence SRPESKEDKSDPKQ. Pro residues-rich tracts occupy residues 98 to 107, 147 to 157, and 163 to 172; these read PARPTPPPRP, PTQPLAPPPVP, and PSKPAPPTPP. The span at 173–190 shows a compositional bias: low complexity; that stretch reads AKKAAPAPRLAGPPGRTA. Basic and acidic residues-rich tracts occupy residues 212–230 and 238–252; these read SLKD…EEKV and PKPK…PPRP. Over residues 332-342 the composition is skewed to acidic residues; the sequence is DDDDDDLDIDG. Composition is skewed to low complexity over residues 362–371 and 385–394; these read KSLAAKPSTP and AGSSAGGSSR. A compositionally biased stretch (basic and acidic residues) spans 395–404; it reads SRGDRRDRKE. Residues 493–666 form the tr-type G domain; it reads RRPPVVTIMG…LLVSEVEELV (174 aa). The interval 502 to 509 is G1; it reads GHVDHGKT. Position 502 to 509 (502 to 509) interacts with GTP; the sequence is GHVDHGKT. The interval 527 to 531 is G2; the sequence is GITQH. Residues 552 to 555 form a G3 region; that stretch reads DTPG. GTP-binding positions include 552-556 and 606-609; these read DTPGH and NKVD. The tract at residues 606 to 609 is G4; it reads NKVD. The segment at 642-644 is G5; the sequence is SAL.

The protein belongs to the TRAFAC class translation factor GTPase superfamily. Classic translation factor GTPase family. IF-2 subfamily.

The protein localises to the cytoplasm. Functionally, one of the essential components for the initiation of protein synthesis. Protects formylmethionyl-tRNA from spontaneous hydrolysis and promotes its binding to the 30S ribosomal subunits. Also involved in the hydrolysis of GTP during the formation of the 70S ribosomal complex. This is Translation initiation factor IF-2 (infB) from Synechocystis sp. (strain ATCC 27184 / PCC 6803 / Kazusa).